A 395-amino-acid polypeptide reads, in one-letter code: MEKISDLIECIAYEKNLPKEMISKVIQGCLLKMAQNELDPLARYLVVEENKQLQLIQLVEVLEDGDERLVNDPSKYISLSKAKEMDPSVKIKDELSYSLSLESMKQGAINRLFKDLQYQLEKALEDSHFEAFQKRLNSVLMGQVILVDHNQNTFIEIEQQFQGVLSMRHRIKGESFKVGDSIKAVLTQVKRTKKGLLLELSRTTPKMLEALLELEVPEIKDKEIEIIHCARIPGNRAKVSFFSHNARIDPIGAAVGVKGVRINAISNELNKENIDCIEYSNVPEIYITLALAPAKILSVEIKKIPIEELNAEEKESIQERFIVNNHLQKAKVRLLDIEKSKAIGKGGVNVCLASMLTGYHIEFETIPSVKENAENESEKETPKVGVEALESLFKN.

One can recognise an S1 motif domain in the interval 137 to 201; sequence NSVLMGQVIL…TKKGLLLELS (65 aa). 2 consecutive KH domains span residues 243 to 291 and 331 to 378; these read SHNA…TLAL and KVRL…NESE.

This sequence belongs to the NusA family. Monomer. Binds directly to the core enzyme of the DNA-dependent RNA polymerase and to nascent RNA.

It is found in the cytoplasm. In terms of biological role, participates in both transcription termination and antitermination. This Helicobacter pylori (strain ATCC 700392 / 26695) (Campylobacter pylori) protein is Transcription termination/antitermination protein NusA.